Reading from the N-terminus, the 476-residue chain is Proline--tRNA ligase 2 (476 aa).

It belongs to the class-II aminoacyl-tRNA synthetase family. ProS type 3 subfamily. Homodimer.

It is found in the cytoplasm. The enzyme catalyses tRNA(Pro) + L-proline + ATP = L-prolyl-tRNA(Pro) + AMP + diphosphate. Its function is as follows. Catalyzes the attachment of proline to tRNA(Pro) in a two-step reaction: proline is first activated by ATP to form Pro-AMP and then transferred to the acceptor end of tRNA(Pro). This Bacillus thuringiensis (strain Al Hakam) protein is Proline--tRNA ligase 2.